Consider the following 182-residue polypeptide: AICACCKVLNSNEKASCFSNKTFKGLGNAGGLPWKCNSVDMKHFVSVTSYVNENNYIRLKWKRDKYIKENNVKVNTDGIPSIDKLQNIVVMGKTSWESIPSKFKPLENRINIILSRTLKKENLAKEYSNVIIIKSVDELFPILKCIKYYKCFIIGGASVYKEFLDRNLIKKIYFTRINNAYT.

The region spanning Ala-1–Thr-182 is the DHFR domain. NADP(+) is bound at residue Gly-25–Gly-31. Asp-40 is a binding site for substrate. NADP(+)-binding positions include Lys-93 to Ser-95 and Leu-114 to Thr-117. Positions 154, 160, and 175 each coordinate substrate. Residue Gly-155 to Glu-162 participates in NADP(+) binding.

The protein in the N-terminal section; belongs to the dihydrofolate reductase family. This sequence in the C-terminal section; belongs to the thymidylate synthase family. Homodimer.

The catalysed reaction is (6S)-5,6,7,8-tetrahydrofolate + NADP(+) = 7,8-dihydrofolate + NADPH + H(+). It catalyses the reaction dUMP + (6R)-5,10-methylene-5,6,7,8-tetrahydrofolate = 7,8-dihydrofolate + dTMP. It functions in the pathway cofactor biosynthesis; tetrahydrofolate biosynthesis; 5,6,7,8-tetrahydrofolate from 7,8-dihydrofolate: step 1/1. In terms of biological role, bifunctional enzyme. Involved in de novo dTMP biosynthesis. Key enzyme in folate metabolism. Catalyzes an essential reaction for de novo glycine and purine synthesis, DNA precursor synthesis, and for the conversion of dUMP to dTMP. The polypeptide is Bifunctional dihydrofolate reductase-thymidylate synthase (Plasmodium vinckei).